The following is a 404-amino-acid chain: MIRNGHGAASAAGLKGPGDQRIVRVWCDGCYDMVHYGHSNQLRQARAMGDYLIVGVHTDEEIAKHKGPPVFTQEERYKMVQAIKWVDEVVPAAPYVTTLETLDKHNCDFCVHGNDITLTVDGRDTYEEVKQAGRYRECKRTQGVSTTDLVGRMLLVTKAHHSSQEMSSEYREYADSFGKPPHPTPAGDTLSSEVSSQCPGGQSPWTGVSQFLQTSQKIIQFASGKEPQPGETVIYVAGAFDLFHIGHVDFLQEVHKLAKRPYVIAGLHFDQEVNRYKGKNYPIMNLHERTLSVLACRYVSEVVIGAPYSVTAELLNHFKVDLVCHGKTEIVPDRDGSDPYQEPKRRGIFYQIDSGSDLTTDLIVQRIIKNRLEYEARNQKKEAKELAFLEATKQQEAPPGGEID.

The tract at residues 173–201 is disordered; the sequence is YADSFGKPPHPTPAGDTLSSEVSSQCPGG. Residues 189–201 show a composition bias toward polar residues; the sequence is TLSSEVSSQCPGG. CTP-binding positions include 239-240, 247-250, Lys277, 325-328, and 354-358; these read AF, HVDF, HGKT, and SGSDL. Ser356 carries the phosphoserine modification. Phosphothreonine occurs at positions 359 and 360.

It belongs to the cytidylyltransferase family.

It catalyses the reaction phosphoethanolamine + CTP + H(+) = CDP-ethanolamine + diphosphate. The protein operates within phospholipid metabolism; phosphatidylethanolamine biosynthesis; phosphatidylethanolamine from ethanolamine: step 2/3. Ethanolamine-phosphate cytidylyltransferase that catalyzes the second step in the synthesis of phosphatidylethanolamine (PE) from ethanolamine via the CDP-ethanolamine pathway. Phosphatidylethanolamine is a dominant inner-leaflet phospholipid in cell membranes, where it plays a role in membrane function by structurally stabilizing membrane-anchored proteins, and participates in important cellular processes such as cell division, cell fusion, blood coagulation, and apoptosis. In Mus musculus (Mouse), this protein is Ethanolamine-phosphate cytidylyltransferase (Pcyt2).